A 192-amino-acid chain; its full sequence is Ribosomal RNA small subunit methyltransferase G (192 aa).

S-adenosyl-L-methionine contacts are provided by residues Gly-63, Phe-68, Ile-112–Glu-113, and Arg-125.

It belongs to the methyltransferase superfamily. RNA methyltransferase RsmG family.

The protein localises to the cytoplasm. The catalysed reaction is guanosine(527) in 16S rRNA + S-adenosyl-L-methionine = N(7)-methylguanosine(527) in 16S rRNA + S-adenosyl-L-homocysteine. Functionally, specifically methylates the N7 position of guanine in position 527 of 16S rRNA. The protein is Ribosomal RNA small subunit methyltransferase G of Rickettsia bellii (strain OSU 85-389).